An 88-amino-acid polypeptide reads, in one-letter code: Small ribosomal subunit protein uS15 (88 aa).

This sequence belongs to the universal ribosomal protein uS15 family. In terms of assembly, part of the 30S ribosomal subunit. Forms a bridge to the 50S subunit in the 70S ribosome, contacting the 23S rRNA.

Its function is as follows. One of the primary rRNA binding proteins, it binds directly to 16S rRNA where it helps nucleate assembly of the platform of the 30S subunit by binding and bridging several RNA helices of the 16S rRNA. Functionally, forms an intersubunit bridge (bridge B4) with the 23S rRNA of the 50S subunit in the ribosome. The protein is Small ribosomal subunit protein uS15 of Acidovorax sp. (strain JS42).